A 344-amino-acid polypeptide reads, in one-letter code: Lipase chaperone (344 aa).

Residues 14-34 (AMVYGVVGLAAIAGVAMWSGA) form a helical membrane-spanning segment.

Belongs to the lipase chaperone family.

The protein localises to the cell inner membrane. Functionally, may be involved in the folding of the extracellular lipase during its passage through the periplasm. This is Lipase chaperone from Burkholderia lata (strain ATCC 17760 / DSM 23089 / LMG 22485 / NCIMB 9086 / R18194 / 383).